The sequence spans 210 residues: Protein RFS1 (210 aa).

The Flavodoxin-like domain occupies 4 to 203 (VAILIYSVDD…RVHQLQGKAF (200 aa)).

This sequence belongs to the WrbA family.

Its subcellular location is the cytoplasm. It is found in the membrane raft. The sequence is that of Protein RFS1 (RFS1) from Saccharomyces cerevisiae (strain ATCC 204508 / S288c) (Baker's yeast).